The primary structure comprises 345 residues: 3-isopropylmalate dehydrogenase (345 aa).

74–87 provides a ligand contact to NAD(+); it reads GPKWDGLPRKIRPE. Arg94, Arg104, Arg132, and Asp217 together coordinate substrate. Mg(2+) contacts are provided by Asp217, Asp241, and Asp245. 274–286 is a binding site for NAD(+); that stretch reads GSAPDIAGKGIAN.

The protein belongs to the isocitrate and isopropylmalate dehydrogenases family. LeuB type 1 subfamily. Homodimer. It depends on Mg(2+) as a cofactor. Requires Mn(2+) as cofactor.

It localises to the cytoplasm. It catalyses the reaction (2R,3S)-3-isopropylmalate + NAD(+) = 4-methyl-2-oxopentanoate + CO2 + NADH. It participates in amino-acid biosynthesis; L-leucine biosynthesis; L-leucine from 3-methyl-2-oxobutanoate: step 3/4. Catalyzes the oxidation of 3-carboxy-2-hydroxy-4-methylpentanoate (3-isopropylmalate) to 3-carboxy-4-methyl-2-oxopentanoate. The product decarboxylates to 4-methyl-2 oxopentanoate. The chain is 3-isopropylmalate dehydrogenase (leuB) from Thermus thermophilus (strain ATCC 27634 / DSM 579 / HB8).